The chain runs to 116 residues: Ribonuclease P protein component (116 aa).

Belongs to the RnpA family. As to quaternary structure, consists of a catalytic RNA component (M1 or rnpB) and a protein subunit.

The enzyme catalyses Endonucleolytic cleavage of RNA, removing 5'-extranucleotides from tRNA precursor.. Its function is as follows. RNaseP catalyzes the removal of the 5'-leader sequence from pre-tRNA to produce the mature 5'-terminus. It can also cleave other RNA substrates such as 4.5S RNA. The protein component plays an auxiliary but essential role in vivo by binding to the 5'-leader sequence and broadening the substrate specificity of the ribozyme. In Caldanaerobacter subterraneus subsp. tengcongensis (strain DSM 15242 / JCM 11007 / NBRC 100824 / MB4) (Thermoanaerobacter tengcongensis), this protein is Ribonuclease P protein component.